Consider the following 361-residue polypeptide: 3-dehydroquinate synthase (361 aa).

Residues 71–76 (DGEQFK), 105–109 (GVIGD), 129–130 (TT), lysine 142, lysine 151, and 169–172 (CLQT) contribute to the NAD(+) site. Glutamate 184, histidine 247, and histidine 264 together coordinate Zn(2+).

The protein belongs to the sugar phosphate cyclases superfamily. Dehydroquinate synthase family. Requires Co(2+) as cofactor. The cofactor is Zn(2+). NAD(+) serves as cofactor.

The protein resides in the cytoplasm. It catalyses the reaction 7-phospho-2-dehydro-3-deoxy-D-arabino-heptonate = 3-dehydroquinate + phosphate. It functions in the pathway metabolic intermediate biosynthesis; chorismate biosynthesis; chorismate from D-erythrose 4-phosphate and phosphoenolpyruvate: step 2/7. Catalyzes the conversion of 3-deoxy-D-arabino-heptulosonate 7-phosphate (DAHP) to dehydroquinate (DHQ). This chain is 3-dehydroquinate synthase, found in Edwardsiella ictaluri (strain 93-146).